Consider the following 348-residue polypeptide: Protein RecA (348 aa).

64 to 71 (GPESSGKT) contributes to the ATP binding site.

It belongs to the RecA family.

The protein localises to the cytoplasm. Can catalyze the hydrolysis of ATP in the presence of single-stranded DNA, the ATP-dependent uptake of single-stranded DNA by duplex DNA, and the ATP-dependent hybridization of homologous single-stranded DNAs. It interacts with LexA causing its activation and leading to its autocatalytic cleavage. This chain is Protein RecA, found in Blastochloris viridis (Rhodopseudomonas viridis).